Consider the following 238-residue polypeptide: 2,3,4,5-tetrahydropyridine-2,6-dicarboxylate N-acetyltransferase (238 aa).

Belongs to the transferase hexapeptide repeat family. DapH subfamily.

It catalyses the reaction (S)-2,3,4,5-tetrahydrodipicolinate + acetyl-CoA + H2O = L-2-acetamido-6-oxoheptanedioate + CoA. It functions in the pathway amino-acid biosynthesis; L-lysine biosynthesis via DAP pathway; LL-2,6-diaminopimelate from (S)-tetrahydrodipicolinate (acetylase route): step 1/3. Catalyzes the transfer of an acetyl group from acetyl-CoA to tetrahydrodipicolinate. In Thermotoga neapolitana (strain ATCC 49049 / DSM 4359 / NBRC 107923 / NS-E), this protein is 2,3,4,5-tetrahydropyridine-2,6-dicarboxylate N-acetyltransferase.